The primary structure comprises 428 residues: MTWQSPISPGYSWYEATIPERPVFPIMPGSRKADVAIIGGGYTGLQAACNLARSGTDVTLIDACRFGDGASGRNGGQFGTGQRVWADETEEVLGREWAQRLFDMAENAKRYVLGFAEEHAIDIEFMPGQLSVGHKASLERDYRNHVEAMTGRYGYPHLSFMDREETVSRLGSSHYHFGIRDTGTGHIHPMKLVVGLARQAALAGANLYEGTKALKIEKKGGAVVIETTSGTITADRALIACNGYIGNLEPVTASHVMPIRSFIGATTVLHGHPEILPGGESVDDSRFVVRYFRKSKDGRLLFGGREAYTADNPRDISAHIRRQICEIYPDLADVEITHAWGGSVGITMPRQPFCREVMPGVTTIGGYSGHGVMLANYCGKLYAELALGKSTELDLLKQLKIPAFPGGTRFRSALLFLALSWYALRDRF.

The polypeptide is Probable oxidoreductase OrdL (ordL) (Rhizobium meliloti (strain 1021) (Ensifer meliloti)).